The primary structure comprises 223 residues: Suppressor of hydroxyurea sensitivity protein 2 (223 aa).

This sequence belongs to the SHU2 family. Component of the SHU complex composed of at least CSM2, PSY3, SHU1 and SHU2.

The protein localises to the nucleus. Its function is as follows. Plays a role in a RAD51/RAD54-dependent homologous recombination repair (HRR) pathway to repair MMS-induced lesions during S-phase. Required for error-free repair of spontaneous and induced DNA lesions to protect the genome from mutation. The protein is Suppressor of hydroxyurea sensitivity protein 2 (SHU2) of Saccharomyces cerevisiae (strain ATCC 204508 / S288c) (Baker's yeast).